A 511-amino-acid chain; its full sequence is Coatomer subunit delta (511 aa).

Residues 168-177 (QARRDAERQG) are compositionally biased toward basic and acidic residues. A disordered region spans residues 168–188 (QARRDAERQGKKAPGFGGFGS). Ser-223 is modified (phosphoserine). N6-acetyllysine occurs at positions 233 and 241. Ser-244 carries the phosphoserine modification. The 241-residue stretch at 271 to 511 (MESVHMKIEE…TFLVDKYEIL (241 aa)) folds into the MHD domain. An N6-acetyllysine mark is found at Lys-309 and Lys-351. Ser-493 bears the Phosphoserine mark.

The protein belongs to the adaptor complexes medium subunit family. Delta-COP subfamily. Oligomeric complex that consists of at least the alpha, beta, beta', gamma, delta, epsilon and zeta subunits.

Its subcellular location is the cytoplasm. It is found in the golgi apparatus membrane. It localises to the cytoplasmic vesicle. The protein localises to the COPI-coated vesicle membrane. Its function is as follows. The coatomer is a cytosolic protein complex that binds to dilysine motifs and reversibly associates with Golgi non-clathrin-coated vesicles, which further mediate biosynthetic protein transport from the ER, via the Golgi up to the trans Golgi network. Coatomer complex is required for budding from Golgi membranes, and is essential for the retrograde Golgi-to-ER transport of dilysine-tagged proteins. In mammals, the coatomer can only be recruited by membranes associated to ADP-ribosylation factors (ARFs), which are small GTP-binding proteins; the complex also influences the Golgi structural integrity, as well as the processing, activity, and endocytic recycling of LDL receptors. The polypeptide is Coatomer subunit delta (Arcn1) (Mus musculus (Mouse)).